A 327-amino-acid polypeptide reads, in one-letter code: Pantothenate kinase (327 aa).

ATP is bound at residue 105–112; it reads GSVAVGKS.

It belongs to the prokaryotic pantothenate kinase family.

The protein localises to the cytoplasm. The catalysed reaction is (R)-pantothenate + ATP = (R)-4'-phosphopantothenate + ADP + H(+). Its pathway is cofactor biosynthesis; coenzyme A biosynthesis; CoA from (R)-pantothenate: step 1/5. This chain is Pantothenate kinase, found in Cutibacterium acnes (strain DSM 16379 / KPA171202) (Propionibacterium acnes).